A 53-amino-acid chain; its full sequence is Conotoxin Cal22e (53 aa).

Residues 1-5 (GRPSA) constitute a propeptide that is removed on maturation.

Contains 4 disulfide bonds. As to expression, expressed by the venom duct.

It localises to the secreted. Probable neurotoxin with unknown target. Possibly targets ion channels. This Californiconus californicus (California cone) protein is Conotoxin Cal22e.